The following is an 82-amino-acid chain: ATP synthase subunit c, chloroplastic (82 aa).

The next 2 helical transmembrane spans lie at Ala-7–Gly-27 and Leu-57–Ala-77.

Belongs to the ATPase C chain family. F-type ATPases have 2 components, F(1) - the catalytic core - and F(0) - the membrane proton channel. F(1) has five subunits: alpha(3), beta(3), gamma(1), delta(1), epsilon(1). F(0) has four main subunits: a(1), b(1), b'(1) and c(10-14). The alpha and beta chains form an alternating ring which encloses part of the gamma chain. F(1) is attached to F(0) by a central stalk formed by the gamma and epsilon chains, while a peripheral stalk is formed by the delta, b and b' chains.

Its subcellular location is the plastid. It is found in the chloroplast thylakoid membrane. F(1)F(0) ATP synthase produces ATP from ADP in the presence of a proton or sodium gradient. F-type ATPases consist of two structural domains, F(1) containing the extramembraneous catalytic core and F(0) containing the membrane proton channel, linked together by a central stalk and a peripheral stalk. During catalysis, ATP synthesis in the catalytic domain of F(1) is coupled via a rotary mechanism of the central stalk subunits to proton translocation. Its function is as follows. Key component of the F(0) channel; it plays a direct role in translocation across the membrane. A homomeric c-ring of between 10-14 subunits forms the central stalk rotor element with the F(1) delta and epsilon subunits. The sequence is that of ATP synthase subunit c, chloroplastic from Guillardia theta (Cryptophyte).